We begin with the raw amino-acid sequence, 1788 residues long: U3 small nucleolar RNA-associated protein 10 (1788 aa).

The HEAT 1 repeat unit spans residues 585-622; the sequence is LDFQAVVPYAIVALSDPAKKVRRAAAELVTVLGSFYET. Residues 884-905 are disordered; it reads PATKRRRVGSSEKSVDSQSPAD. 6 HEAT repeats span residues 926–962, 1049–1086, 1257–1294, 1301–1339, 1703–1740, and 1744–1781; these read AKHPELLPSLFTTLSELQHLRTVVGSELGYLQSLVLS, QTVKEVIPPLIETFRKSRRNLVASTAELLTSFVVAYEH, LSIAEFIKSVEALLDRPNVILRQKVLRALERRVDSESI, EALLAFLPQLTAVIRESDDMNYKHTAVNCVDKIAEKYGK, EHHKEINSALLKHLRSEQAAVRLAVIKCEQELTARLGE, and QSLPEMLPFISELQDDDDEVVERENRRWIVGIEETLGE.

The protein belongs to the HEATR1/UTP10 family. As to quaternary structure, component of the ribosomal small subunit (SSU) processome.

The protein resides in the nucleus. Its subcellular location is the nucleolus. Involved in nucleolar processing of pre-18S ribosomal RNA. Involved in ribosome biosynthesis. The protein is U3 small nucleolar RNA-associated protein 10 (rbg-5) of Neurospora crassa (strain ATCC 24698 / 74-OR23-1A / CBS 708.71 / DSM 1257 / FGSC 987).